Reading from the N-terminus, the 262-residue chain is Pyridoxine 5'-phosphate synthase (262 aa).

Asn-6 provides a ligand contact to 3-amino-2-oxopropyl phosphate. A 1-deoxy-D-xylulose 5-phosphate-binding site is contributed by 8-9 (DH). Arg-17 is a binding site for 3-amino-2-oxopropyl phosphate. His-43 functions as the Proton acceptor in the catalytic mechanism. Arg-45 and His-50 together coordinate 1-deoxy-D-xylulose 5-phosphate. Glu-70 functions as the Proton acceptor in the catalytic mechanism. Thr-102 is a binding site for 1-deoxy-D-xylulose 5-phosphate. Residue His-215 is the Proton donor of the active site. 3-amino-2-oxopropyl phosphate contacts are provided by residues Gly-216 and 237–238 (GH).

Belongs to the PNP synthase family. In terms of assembly, homooctamer; tetramer of dimers.

It is found in the cytoplasm. The catalysed reaction is 3-amino-2-oxopropyl phosphate + 1-deoxy-D-xylulose 5-phosphate = pyridoxine 5'-phosphate + phosphate + 2 H2O + H(+). It participates in cofactor biosynthesis; pyridoxine 5'-phosphate biosynthesis; pyridoxine 5'-phosphate from D-erythrose 4-phosphate: step 5/5. Functionally, catalyzes the complicated ring closure reaction between the two acyclic compounds 1-deoxy-D-xylulose-5-phosphate (DXP) and 3-amino-2-oxopropyl phosphate (1-amino-acetone-3-phosphate or AAP) to form pyridoxine 5'-phosphate (PNP) and inorganic phosphate. This Helicobacter acinonychis (strain Sheeba) protein is Pyridoxine 5'-phosphate synthase.